An 89-amino-acid chain; its full sequence is UPF0237 protein lin0537 (89 aa).

In terms of domain architecture, ACT spans 4 to 78; it reads VLTVIGKDNV…EELQVKIHIQ (75 aa).

Belongs to the UPF0237 family.

The sequence is that of UPF0237 protein lin0537 from Listeria innocua serovar 6a (strain ATCC BAA-680 / CLIP 11262).